A 517-amino-acid polypeptide reads, in one-letter code: Maturase K (517 aa).

This sequence belongs to the intron maturase 2 family. MatK subfamily.

It is found in the plastid. It localises to the chloroplast. Its function is as follows. Usually encoded in the trnK tRNA gene intron. Probably assists in splicing its own and other chloroplast group II introns. The sequence is that of Maturase K from Veronica arvensis (Wall speedwell).